We begin with the raw amino-acid sequence, 156 residues long: Small ribosomal subunit protein uS7 (156 aa).

Belongs to the universal ribosomal protein uS7 family. In terms of assembly, part of the 30S ribosomal subunit. Contacts proteins S9 and S11.

One of the primary rRNA binding proteins, it binds directly to 16S rRNA where it nucleates assembly of the head domain of the 30S subunit. Is located at the subunit interface close to the decoding center, probably blocks exit of the E-site tRNA. This chain is Small ribosomal subunit protein uS7, found in Thermoanaerobacter pseudethanolicus (strain ATCC 33223 / 39E) (Clostridium thermohydrosulfuricum).